Reading from the N-terminus, the 188-residue chain is Elongation factor P-like protein (188 aa).

It belongs to the elongation factor P family.

This is Elongation factor P-like protein from Saccharophagus degradans (strain 2-40 / ATCC 43961 / DSM 17024).